A 308-amino-acid chain; its full sequence is 4-hydroxyproline 2-epimerase (308 aa).

The Proton acceptor role is filled by C88. Residues 89–90 (GH), H208, and D232 each bind substrate. The active-site Proton donor is the C236. 237–238 (GT) contacts substrate.

The protein belongs to the proline racemase family.

The catalysed reaction is trans-4-hydroxy-L-proline = cis-4-hydroxy-D-proline. In terms of biological role, catalyzes the reversible epimerization of cis-4-hydroxy-D-proline (c4DHyp) to trans-4-hydroxy-L-proline (t4LHyp). May be involved in a degradation pathway that allows P.putida strain KT2440 to grow on either epimer of 4-hydroxyproline, c4DHyp and t4LHyp, as the sole carbon and nitrogen source. Does not exhibit measureable racemase activity in vitro with any of the 19 natural chiral amino acid enantiomers. In Pseudomonas putida (strain ATCC 47054 / DSM 6125 / CFBP 8728 / NCIMB 11950 / KT2440), this protein is 4-hydroxyproline 2-epimerase.